The chain runs to 446 residues: D(1A) dopamine receptor (446 aa).

Residues 1-23 (MRTLNTSAMDGTGLVVERDFSVR) lie on the Extracellular side of the membrane. Asn-5 carries N-linked (GlcNAc...) asparagine glycosylation. A helical membrane pass occupies residues 24 to 49 (ILTACFLSLLILSTLLGNTLVCAAVI). Over 50–60 (RFRHLRSKVTN) the chain is Cytoplasmic. The helical transmembrane segment at 61-87 (FFVISLAVSDLLVAVLVMPWKAVAEIA) threads the bilayer. Over 88–96 (GFWPFGSFC) the chain is Extracellular. Cys-96 and Cys-186 are joined by a disulfide. A helical transmembrane segment spans residues 97-119 (NIWVAFDIMCSTASILNLCVISV). Over 120 to 138 (DRYWAISSPFRYERKMTPK) the chain is Cytoplasmic. The chain crosses the membrane as a helical span at residues 139–163 (AAFILISVAWTLSVLISFIPVQLSW). Topologically, residues 164-192 (HKAKPTSPSDGNATSLAETIDNCDSSLSR) are extracellular. An N-linked (GlcNAc...) asparagine glycan is attached at Asn-175. A helical membrane pass occupies residues 193-218 (TYAISSSVISFYIPVAIMIVTYTRIY). The Cytoplasmic segment spans residues 219–272 (RIAQKQIRRIAALERAAVHAKNCQTTTGNGKPVECSQPESSFKMSFKRETKVLK). Residues 273 to 299 (TLSVIMGVFVCCWLPFFILNCILPFCG) traverse the membrane as a helical segment. Topologically, residues 300–312 (SGETQPFCIDSIT) are extracellular. Residues 313–337 (FDVFVWFGWANSSLNPIIYAFNADF) traverse the membrane as a helical segment. The Cytoplasmic portion of the chain corresponds to 338–446 (RKAFSTLLGC…PITQNGQHPT (109 aa)). S-palmitoyl cysteine attachment occurs at residues Cys-347 and Cys-351.

The protein belongs to the G-protein coupled receptor 1 family. In terms of assembly, interacts with DNAJC14 via its C-terminus. Interacts with DRD2. Interacts with DORIP1.

Its subcellular location is the cell membrane. The protein localises to the endoplasmic reticulum membrane. The protein resides in the cell projection. It localises to the cilium membrane. It is found in the dendrite. Its subcellular location is the dendritic spine. Functionally, dopamine receptor whose activity is mediated by G proteins which activate adenylyl cyclase. The chain is D(1A) dopamine receptor (DRD1) from Macaca mulatta (Rhesus macaque).